Here is a 691-residue protein sequence, read N- to C-terminus: DNA ligase (691 aa).

Residues 41 to 45 (DAEYD), 90 to 91 (SL), and Glu130 each bind NAD(+). The N6-AMP-lysine intermediate role is filled by Lys132. Positions 153, 190, 307, and 331 each coordinate NAD(+). 4 residues coordinate Zn(2+): Cys425, Cys428, Cys443, and Cys449. Residues 610 to 691 (APQGVLAGKT…MHTLLEGHAR (82 aa)) enclose the BRCT domain.

This sequence belongs to the NAD-dependent DNA ligase family. LigA subfamily. Requires Mg(2+) as cofactor. Mn(2+) serves as cofactor.

The enzyme catalyses NAD(+) + (deoxyribonucleotide)n-3'-hydroxyl + 5'-phospho-(deoxyribonucleotide)m = (deoxyribonucleotide)n+m + AMP + beta-nicotinamide D-nucleotide.. DNA ligase that catalyzes the formation of phosphodiester linkages between 5'-phosphoryl and 3'-hydroxyl groups in double-stranded DNA using NAD as a coenzyme and as the energy source for the reaction. It is essential for DNA replication and repair of damaged DNA. This Burkholderia pseudomallei (strain K96243) protein is DNA ligase.